We begin with the raw amino-acid sequence, 671 residues long: DNA ligase (671 aa).

Residues 34 to 38, 83 to 84, and glutamate 117 each bind NAD(+); these read DAEYD and SL. Lysine 119 serves as the catalytic N6-AMP-lysine intermediate. 4 residues coordinate NAD(+): arginine 140, glutamate 177, lysine 293, and lysine 317. Cysteine 411, cysteine 414, cysteine 429, and cysteine 434 together coordinate Zn(2+). The BRCT domain occupies 591–671; the sequence is KVGGKFTGKT…EFLQMLEGEQ (81 aa).

It belongs to the NAD-dependent DNA ligase family. LigA subfamily. Requires Mg(2+) as cofactor. Mn(2+) is required as a cofactor.

It catalyses the reaction NAD(+) + (deoxyribonucleotide)n-3'-hydroxyl + 5'-phospho-(deoxyribonucleotide)m = (deoxyribonucleotide)n+m + AMP + beta-nicotinamide D-nucleotide.. Functionally, DNA ligase that catalyzes the formation of phosphodiester linkages between 5'-phosphoryl and 3'-hydroxyl groups in double-stranded DNA using NAD as a coenzyme and as the energy source for the reaction. It is essential for DNA replication and repair of damaged DNA. In Geobacter metallireducens (strain ATCC 53774 / DSM 7210 / GS-15), this protein is DNA ligase.